The following is a 78-amino-acid chain: Large ribosomal subunit protein bL28 (78 aa).

Positions 1–22 (MAKVCQVTGKRPVTGHNVSHAK) are disordered.

Belongs to the bacterial ribosomal protein bL28 family.

This chain is Large ribosomal subunit protein bL28, found in Teredinibacter turnerae (strain ATCC 39867 / T7901).